The following is a 439-amino-acid chain: Mitochondrial distribution and morphology protein 12 (439 aa).

The 439-residue stretch at 1–439 (MSIDINWDTI…VYPSFWTFLV (439 aa)) folds into the SMP-LTD domain. Disordered stretches follow at residues 65–165 (PLPD…PGAL) and 229–284 (LTLT…HEKS). Acidic residues predominate over residues 69–90 (FYEDDEDYPDEEGDEAENEAED). Over residues 109–121 (PSRDSQSRERGRG) the composition is skewed to basic and acidic residues. Over residues 229-243 (LTLTPQSHPDPTSRP) the composition is skewed to polar residues.

This sequence belongs to the MDM12 family. As to quaternary structure, component of the ER-mitochondria encounter structure (ERMES) or MDM complex, composed of MMM1, MDM10, mdm12 and MDM34. An MMM1 homodimer associates with one molecule of mdm12 on each side in a pairwise head-to-tail manner, and the SMP-LTD domains of MMM1 and mdm12 generate a continuous hydrophobic tunnel for phospholipid trafficking.

It is found in the mitochondrion outer membrane. The protein localises to the endoplasmic reticulum membrane. In terms of biological role, component of the ERMES/MDM complex, which serves as a molecular tether to connect the endoplasmic reticulum (ER) and mitochondria. Components of this complex are involved in the control of mitochondrial shape and protein biogenesis, and function in nonvesicular lipid trafficking between the ER and mitochondria. mdm12 is required for the interaction of the ER-resident membrane protein MMM1 and the outer mitochondrial membrane-resident beta-barrel protein MDM10. The mdm12-MMM1 subcomplex functions in the major beta-barrel assembly pathway that is responsible for biogenesis of all mitochondrial outer membrane beta-barrel proteins, and acts in a late step after the SAM complex. The MDM10-mdm12-MMM1 subcomplex further acts in the TOM40-specific pathway after the action of the mdm12-MMM1 complex. Essential for establishing and maintaining the structure of mitochondria and maintenance of mtDNA nucleoids. This Pyrenophora tritici-repentis (strain Pt-1C-BFP) (Wheat tan spot fungus) protein is Mitochondrial distribution and morphology protein 12.